A 617-amino-acid polypeptide reads, in one-letter code: mRNA-decapping enzyme 1B (617 aa).

A2 carries the post-translational modification N-acetylalanine. S147 is modified (phosphoserine). The residue at position 191 (Y191) is a Phosphotyrosine. 2 disordered regions span residues 195-222 and 243-266; these read NLIKPIPVKPSENQQQRIPQPNQTLDPE and TVEPPQTLHQQQQQQQQQQEKLPI. A compositionally biased stretch (polar residues) spans 205-219; it reads SENQQQRIPQPNQTL. Residues 252–261 show a composition bias toward low complexity; sequence QQQQQQQQQQ. Phosphoserine occurs at positions 275 and 336. The segment at 362-426 is disordered; that stretch reads TPGAANKCDP…VGHQAHGREQ (65 aa). Low complexity predominate over residues 371 to 381; that stretch reads PSTPAPASSAA. Residue T392 is modified to Phosphothreonine. 2 positions are modified to phosphoserine: S448 and S511.

It belongs to the DCP1 family. Interacts with DCP1A. As to quaternary structure, (Microbial infection) Interacts with rotavirus A non-structural protein 2; this interaction probably plays a role in the sequestration of DCP1B in viral factories. Interacts with rotavirus A non-structural protein 5; this interaction probably plays a role in its sequestration in viral factories.

It is found in the cytoplasm. Its subcellular location is the nucleus. It catalyses the reaction a 5'-end (N(7)-methyl 5'-triphosphoguanosine)-ribonucleoside in mRNA + H2O = N(7)-methyl-GDP + a 5'-end phospho-ribonucleoside in mRNA + 2 H(+). Its function is as follows. May play a role in the degradation of mRNAs, both in normal mRNA turnover and in nonsense-mediated mRNA decay. May remove the 7-methyl guanine cap structure from mRNA molecules, yielding a 5'-phosphorylated mRNA fragment and 7m-GDP. The chain is mRNA-decapping enzyme 1B (DCP1B) from Homo sapiens (Human).